Reading from the N-terminus, the 200-residue chain is Peptidyl-tRNA hydrolase (200 aa).

TRNA is bound at residue Phe16. Residue His21 is the Proton acceptor of the active site. TRNA contacts are provided by Phe67, Asn69, and Asn115.

It belongs to the PTH family. In terms of assembly, monomer.

Its subcellular location is the cytoplasm. The enzyme catalyses an N-acyl-L-alpha-aminoacyl-tRNA + H2O = an N-acyl-L-amino acid + a tRNA + H(+). Functionally, hydrolyzes ribosome-free peptidyl-tRNAs (with 1 or more amino acids incorporated), which drop off the ribosome during protein synthesis, or as a result of ribosome stalling. Its function is as follows. Catalyzes the release of premature peptidyl moieties from peptidyl-tRNA molecules trapped in stalled 50S ribosomal subunits, and thus maintains levels of free tRNAs and 50S ribosomes. This Prochlorococcus marinus (strain MIT 9215) protein is Peptidyl-tRNA hydrolase.